The sequence spans 44 residues: uncharacterized protein (44 aa).

Positions 22-44 (LNSAPAFKSSQNTSTQAKPTFSN) are disordered.

This is an uncharacterized protein from Dictyostelium discoideum (Social amoeba).